Consider the following 166-residue polypeptide: NADH-ubiquinone oxidoreductase chain 6 (166 aa).

The next 5 membrane-spanning stretches (helical) occupy residues 1–21, 26–46, 47–67, 86–106, and 139–159; these read MMYF…AFAS, IYGG…IVSL, GGSF…LVVF, TVVL…YEFF, and CGGW…FVVL.

The protein belongs to the complex I subunit 6 family. In terms of assembly, core subunit of respiratory chain NADH dehydrogenase (Complex I) which is composed of 45 different subunits.

Its subcellular location is the mitochondrion inner membrane. The catalysed reaction is a ubiquinone + NADH + 5 H(+)(in) = a ubiquinol + NAD(+) + 4 H(+)(out). In terms of biological role, core subunit of the mitochondrial membrane respiratory chain NADH dehydrogenase (Complex I) which catalyzes electron transfer from NADH through the respiratory chain, using ubiquinone as an electron acceptor. Essential for the catalytic activity and assembly of complex I. The sequence is that of NADH-ubiquinone oxidoreductase chain 6 (MT-ND6) from Tachyglossus aculeatus aculeatus (Southeast Australian short-beaked echidna).